A 422-amino-acid chain; its full sequence is Isocitrate dehydrogenase [NADP] (422 aa).

Thr-94 provides a ligand contact to NADP(+). Positions 103, 105, 109, 119, and 143 each coordinate D-threo-isocitrate. A Mg(2+)-binding site is contributed by Asp-310. NADP(+) contacts are provided by residues 344-350 (HGTAPKY), Asn-357, Tyr-396, and Arg-400.

The protein belongs to the isocitrate and isopropylmalate dehydrogenases family. As to quaternary structure, homodimer. The cofactor is Mg(2+). Requires Mn(2+) as cofactor.

It catalyses the reaction D-threo-isocitrate + NADP(+) = 2-oxoglutarate + CO2 + NADPH. Functionally, catalyzes the oxidative decarboxylation of isocitrate to 2-oxoglutarate and carbon dioxide with the concomitant reduction of NADP(+). The sequence is that of Isocitrate dehydrogenase [NADP] (icd) from Staphylococcus aureus (strain MSSA476).